Reading from the N-terminus, the 343-residue chain is 4-hydroxy-2-oxovalerate aldolase (343 aa).

The Pyruvate carboxyltransferase domain maps to Pro-4–Met-254. Arg-12 to Asp-13 contributes to the substrate binding site. Asp-13 serves as a coordination point for Mn(2+). Residue His-16 is the Proton acceptor of the active site. Residues Ser-166 and His-193 each coordinate substrate. Mn(2+)-binding residues include His-193 and His-195. Tyr-284 serves as a coordination point for substrate.

The protein belongs to the 4-hydroxy-2-oxovalerate aldolase family.

The enzyme catalyses (S)-4-hydroxy-2-oxopentanoate = acetaldehyde + pyruvate. This is 4-hydroxy-2-oxovalerate aldolase from Chloroflexus aurantiacus (strain ATCC 29364 / DSM 637 / Y-400-fl).